Here is a 112-residue protein sequence, read N- to C-terminus: Small ribosomal subunit protein bS6 (112 aa).

It belongs to the bacterial ribosomal protein bS6 family.

In terms of biological role, binds together with bS18 to 16S ribosomal RNA. The polypeptide is Small ribosomal subunit protein bS6 (Azobacteroides pseudotrichonymphae genomovar. CFP2).